Consider the following 472-residue polypeptide: Argininosuccinate lyase (472 aa).

This sequence belongs to the lyase 1 family. Argininosuccinate lyase subfamily.

Its subcellular location is the cytoplasm. The catalysed reaction is 2-(N(omega)-L-arginino)succinate = fumarate + L-arginine. Its pathway is amino-acid biosynthesis; L-arginine biosynthesis; L-arginine from L-ornithine and carbamoyl phosphate: step 3/3. This chain is Argininosuccinate lyase, found in Polynucleobacter asymbioticus (strain DSM 18221 / CIP 109841 / QLW-P1DMWA-1) (Polynucleobacter necessarius subsp. asymbioticus).